A 193-amino-acid chain; its full sequence is uncharacterized protein (193 aa).

Arginine 8 contributes to the substrate binding site. The active-site Tele-phosphohistidine intermediate is histidine 9. Substrate contacts are provided by asparagine 15, glutamine 21, and arginine 58. Glutamate 82 (proton donor/acceptor) is an active-site residue. Histidine 139 serves as a coordination point for substrate.

It belongs to the phosphoglycerate mutase family. GpmB subfamily.

Functionally, phosphatase with broad substrate specificity. Does not have phosphoglycerate mutase activity. This is an uncharacterized protein from Bacillus subtilis (strain 168).